A 473-amino-acid polypeptide reads, in one-letter code: Photosystem II CP43 reaction center protein (473 aa).

Positions 1 to 14 (MKTLYSLRRFYHVE) are excised as a propeptide. N-acetylthreonine is present on Thr15. Thr15 carries the post-translational modification Phosphothreonine. 5 helical membrane-spanning segments follow: residues 69–93 (LFEV…PHLA), 134–155 (LLGP…KDRN), 178–200 (KALY…RKIT), 255–275 (KPFA…LSYS), and 291–312 (WFNN…ASQA). Glu367 serves as a coordination point for [CaMn4O5] cluster. A helical membrane pass occupies residues 447 to 471 (RARAAAAGFEKGIDRDFEPVLSMTP).

It belongs to the PsbB/PsbC family. PsbC subfamily. As to quaternary structure, PSII is composed of 1 copy each of membrane proteins PsbA, PsbB, PsbC, PsbD, PsbE, PsbF, PsbH, PsbI, PsbJ, PsbK, PsbL, PsbM, PsbT, PsbX, PsbY, PsbZ, Psb30/Ycf12, at least 3 peripheral proteins of the oxygen-evolving complex and a large number of cofactors. It forms dimeric complexes. Binds multiple chlorophylls and provides some of the ligands for the Ca-4Mn-5O cluster of the oxygen-evolving complex. It may also provide a ligand for a Cl- that is required for oxygen evolution. PSII binds additional chlorophylls, carotenoids and specific lipids. serves as cofactor.

The protein resides in the plastid. It is found in the chloroplast thylakoid membrane. Functionally, one of the components of the core complex of photosystem II (PSII). It binds chlorophyll and helps catalyze the primary light-induced photochemical processes of PSII. PSII is a light-driven water:plastoquinone oxidoreductase, using light energy to abstract electrons from H(2)O, generating O(2) and a proton gradient subsequently used for ATP formation. This chain is Photosystem II CP43 reaction center protein, found in Coffea arabica (Arabian coffee).